The primary structure comprises 484 residues: Probable cytochrome P450 316a1 (484 aa).

Cys433 is a binding site for heme.

It belongs to the cytochrome P450 family. Heme is required as a cofactor.

The protein localises to the endoplasmic reticulum membrane. Its subcellular location is the microsome membrane. May be involved in the metabolism of insect hormones and in the breakdown of synthetic insecticides. The sequence is that of Probable cytochrome P450 316a1 (Cyp316a1) from Drosophila melanogaster (Fruit fly).